Reading from the N-terminus, the 152-residue chain is Transcriptional repressor NrdR (152 aa).

Residues Cys-3–Cys-34 fold into a zinc finger. Positions Ile-49–Glu-139 constitute an ATP-cone domain.

This sequence belongs to the NrdR family. The cofactor is Zn(2+).

Functionally, negatively regulates transcription of bacterial ribonucleotide reductase nrd genes and operons by binding to NrdR-boxes. The protein is Transcriptional repressor NrdR of Opitutus terrae (strain DSM 11246 / JCM 15787 / PB90-1).